Reading from the N-terminus, the 301-residue chain is Phosphatidylglycerol--prolipoprotein diacylglyceryl transferase (301 aa).

4 consecutive transmembrane segments (helical) span residues 10–30 (IAFS…LAGF), 57–77 (LLFY…MLFY), 92–112 (VWEG…AVAW), and 119–139 (MHMF…LGFG). Residue Arg140 participates in a 1,2-diacyl-sn-glycero-3-phospho-(1'-sn-glycerol) binding. 3 helical membrane-spanning segments follow: residues 202 to 222 (PSQL…LWLF), 230 to 250 (YAVS…VEFV), and 264 to 284 (LTRG…LFWL).

Belongs to the Lgt family.

It is found in the cell inner membrane. It catalyses the reaction L-cysteinyl-[prolipoprotein] + a 1,2-diacyl-sn-glycero-3-phospho-(1'-sn-glycerol) = an S-1,2-diacyl-sn-glyceryl-L-cysteinyl-[prolipoprotein] + sn-glycerol 1-phosphate + H(+). Its pathway is protein modification; lipoprotein biosynthesis (diacylglyceryl transfer). Its function is as follows. Catalyzes the transfer of the diacylglyceryl group from phosphatidylglycerol to the sulfhydryl group of the N-terminal cysteine of a prolipoprotein, the first step in the formation of mature lipoproteins. The protein is Phosphatidylglycerol--prolipoprotein diacylglyceryl transferase of Xylella fastidiosa (strain M12).